A 215-amino-acid chain; its full sequence is MKFFLDTANVEKIKEFNALGLVDGVTTNPSLIKKEGRDFYEVIKEICSIVKGPVSAEVIALDAEGMIKEAKELVKIAENVVIKIPMTKEGMKAVNILSKEGIKTNVTLIFSANQALLAAKAGATYVSPFVGRLDDIGQDGLLLISEIMQIFSAYGIETEVIVASVRHPIHVTESAKMGADVATIPFDVLDKLFNHSLTDIGIEKFLADWDAHLKR.

Lys-83 (schiff-base intermediate with substrate) is an active-site residue.

The protein belongs to the transaldolase family. Type 3B subfamily.

It localises to the cytoplasm. The catalysed reaction is D-sedoheptulose 7-phosphate + D-glyceraldehyde 3-phosphate = D-erythrose 4-phosphate + beta-D-fructose 6-phosphate. It participates in carbohydrate degradation; pentose phosphate pathway; D-glyceraldehyde 3-phosphate and beta-D-fructose 6-phosphate from D-ribose 5-phosphate and D-xylulose 5-phosphate (non-oxidative stage): step 2/3. Its function is as follows. Transaldolase is important for the balance of metabolites in the pentose-phosphate pathway. This is Probable transaldolase from Methanococcus vannielii (strain ATCC 35089 / DSM 1224 / JCM 13029 / OCM 148 / SB).